Reading from the N-terminus, the 264-residue chain is Thymidylate synthase (264 aa).

Residue Arg-21 coordinates dUMP. Residue His-51 coordinates (6R)-5,10-methylene-5,6,7,8-tetrahydrofolate. 126–127 (RR) lines the dUMP pocket. The Nucleophile role is filled by Cys-146. Residues 166 to 169 (RSVD), Asn-177, and 207 to 209 (HLY) contribute to the dUMP site. Asp-169 contributes to the (6R)-5,10-methylene-5,6,7,8-tetrahydrofolate binding site. Ala-263 provides a ligand contact to (6R)-5,10-methylene-5,6,7,8-tetrahydrofolate.

This sequence belongs to the thymidylate synthase family. Bacterial-type ThyA subfamily. In terms of assembly, homodimer.

It is found in the cytoplasm. The catalysed reaction is dUMP + (6R)-5,10-methylene-5,6,7,8-tetrahydrofolate = 7,8-dihydrofolate + dTMP. Its pathway is pyrimidine metabolism; dTTP biosynthesis. Functionally, catalyzes the reductive methylation of 2'-deoxyuridine-5'-monophosphate (dUMP) to 2'-deoxythymidine-5'-monophosphate (dTMP) while utilizing 5,10-methylenetetrahydrofolate (mTHF) as the methyl donor and reductant in the reaction, yielding dihydrofolate (DHF) as a by-product. This enzymatic reaction provides an intracellular de novo source of dTMP, an essential precursor for DNA biosynthesis. The polypeptide is Thymidylate synthase (Geobacillus thermodenitrificans (strain NG80-2)).